The sequence spans 348 residues: Phage-like element PBSX protein XkdT (348 aa).

This sequence belongs to the Mu gp47/PBSX XkdT family.

The polypeptide is Phage-like element PBSX protein XkdT (xkdT) (Bacillus subtilis (strain 168)).